We begin with the raw amino-acid sequence, 139 residues long: Acidic phospholipase A2 H1E6 (139 aa).

The N-terminal stretch at 1–16 (MRTLWILAVLQVGVEG) is a signal peptide. 7 disulfide bridges follow: Cys42–Cys132, Cys44–Cys60, Cys59–Cys111, Cys65–Cys139, Cys66–Cys104, Cys73–Cys97, and Cys91–Cys102. Residues Tyr43, Gly45, and Gly47 each contribute to the Ca(2+) site. Residue His63 is part of the active site. A Ca(2+)-binding site is contributed by Asp64. Asp105 is an active-site residue.

As to quaternary structure, homodimer. The cofactor is Ca(2+). As to expression, expressed by the venom gland.

Its subcellular location is the secreted. It carries out the reaction a 1,2-diacyl-sn-glycero-3-phosphocholine + H2O = a 1-acyl-sn-glycero-3-phosphocholine + a fatty acid + H(+). Functionally, snake venom phospholipase A2 (PLA2) that inhibits ADP-induced platelet aggregation. PLA2 catalyzes the calcium-dependent hydrolysis of the 2-acyl groups in 3-sn-phosphoglycerides. The protein is Acidic phospholipase A2 H1E6 of Calloselasma rhodostoma (Malayan pit viper).